The primary structure comprises 47 residues: Delta-stichotoxin-Hcr1d (47 aa).

Cystine bridges form between cysteine 3–cysteine 43, cysteine 5–cysteine 33, and cysteine 26–cysteine 44.

Belongs to the sea anemone sodium channel inhibitory toxin family. Type II subfamily.

The protein localises to the secreted. Its subcellular location is the nematocyst. Functionally, binds to site 3 of voltage-gated sodium channels and inhibits the inactivation process. This chain is Delta-stichotoxin-Hcr1d, found in Radianthus crispa (Leathery sea anemone).